Here is a 278-residue protein sequence, read N- to C-terminus: Fe(II)/2-oxoglutarate-dependent dioxygenase nvfI (278 aa).

The protein belongs to the asaB hydroxylase/desaturase family.

It catalyses the reaction asnovolin A + 2-oxoglutarate + 2 O2 = fumigatonoid A + succinate + CO2. The protein operates within secondary metabolite biosynthesis; terpenoid biosynthesis. Fe(II)/2-oxoglutarate-dependent dioxygenase; part of the gene cluster that mediates the biosynthesis of novofumigatonin, a heavily oxygenated meroterpenoid containing a unique orthoester moiety. The first step of the pathway is the synthesis of 3,5-dimethylorsellinic acid (DMOA) by the polyketide synthase nvfA via condensation of one acetyl-CoA starter unit with 3 malonyl-CoA units and 2 methylations. DMOA is then converted to farnesyl-DMOA by the farnesyltransferase nvfB. Epoxydation by FAD-dependent monooxygenase nvfK, followed by a protonation-initiated cyclization catalyzed by the terpene cyclase nvfL leads to the production of asnavolin H. The short chain dehydrogenase nvfC then as a 3-OH dehydrogenase of asnovolin H to yield chemesin D. There are two branches to synthesize asnovolin A from chemesin D. In one branch, chemesin D undergoes Baeyer-Villiger oxidation by nvfH, methylation by nvfJ, and enoyl reduction by the nvfM D enoylreductase that reduces the double bond between C-5'and C-6', to form respectively asnovolin I, asnovolin K, and asnovolin A. In the other branch, the methylation precedes the Baeyer-Villiger oxidation and the enoyl reduction to yield asnovolin A via the asnovolin J intermediate. Asnovolin A is further converted to fumigatonoid A by the Fe(II)/2-oxoglutarate-dependent dioxygenase nvfI that catalyzes an endoperoxidation reaction. The alpha/beta hydrolase nvfD then acts as an epimerase that converts fumigatonoid A to its C-5' epimer, which then undergoes spontaneous or nvfD-catalyzed lactonization. The following step utilizes the ketoreductase nvfG to produce fumigatonoid B. The dioxygenase nvfE further converts fumigatonoid B into fumigatonoid C. Finally the Fe(II)/2-oxoglutarate-dependent dioxygenase nvfF catalyzes two rounds of oxidation to transform fumigatonoid C into the end product, novofumigatonin A. In Aspergillus novofumigatus (strain IBT 16806), this protein is Fe(II)/2-oxoglutarate-dependent dioxygenase nvfI.